Consider the following 199-residue polypeptide: NAD(P)H dehydrogenase (quinone) (199 aa).

The Flavodoxin-like domain occupies 4–190 (VLVLYYSSYG…TGARYQGRKI (187 aa)). FMN contacts are provided by residues 10-15 (SSYGHL) and 78-80 (TRF). Y12 serves as a coordination point for NAD(+). W98 provides a ligand contact to substrate. Residues 113–119 (STATQHG) and H134 contribute to the FMN site.

This sequence belongs to the WrbA family. It depends on FMN as a cofactor.

The catalysed reaction is a quinone + NADH + H(+) = a quinol + NAD(+). It catalyses the reaction a quinone + NADPH + H(+) = a quinol + NADP(+). The polypeptide is NAD(P)H dehydrogenase (quinone) (Caulobacter vibrioides (strain ATCC 19089 / CIP 103742 / CB 15) (Caulobacter crescentus)).